A 539-amino-acid polypeptide reads, in one-letter code: Chaperonin GroEL (539 aa).

Residues 29–32 (TLGP), 86–90 (DGTTT), glycine 413, and aspartate 492 each bind ATP.

This sequence belongs to the chaperonin (HSP60) family. In terms of assembly, forms a cylinder of 14 subunits composed of two heptameric rings stacked back-to-back. Interacts with the co-chaperonin GroES.

It is found in the cytoplasm. It carries out the reaction ATP + H2O + a folded polypeptide = ADP + phosphate + an unfolded polypeptide.. Functionally, together with its co-chaperonin GroES, plays an essential role in assisting protein folding. The GroEL-GroES system forms a nano-cage that allows encapsulation of the non-native substrate proteins and provides a physical environment optimized to promote and accelerate protein folding. The chain is Chaperonin GroEL from Fusobacterium nucleatum subsp. polymorphum (Fusobacterium polymorphum).